The following is a 372-amino-acid chain: L-selectin (372 aa).

Positions 1 to 28 (MIFPRKCQSTQRDLWNIFKLWGWTMLCC) are cleaved as a signal peptide. Residues 29-38 (DFLAHHGTDC) constitute a propeptide that is removed on maturation. The Extracellular segment spans residues 39–332 (WTYHYSENPM…FSMIKEGDYN (294 aa)). The region spanning 55–155 (RFCRENYTDL…ACHKPKAALC (101 aa)) is the C-type lectin domain. Intrachain disulfides connect cysteine 57–cysteine 155, cysteine 128–cysteine 147, cysteine 128–cysteine 160, cysteine 160–cysteine 171, cysteine 165–cysteine 180, cysteine 182–cysteine 191, cysteine 197–cysteine 241, cysteine 227–cysteine 254, cysteine 259–cysteine 303, and cysteine 289–cysteine 316. N-linked (GlcNAc...) asparagine glycans are attached at residues asparagine 60 and asparagine 104. Residues glutamate 118, asparagine 120, glutamate 126, asparagine 143, and aspartate 144 each coordinate Ca(2+). The region spanning 156–192 (YTASCQPWSCSGHGECVEIINNYTCNCDVGYYGPQCQ) is the EGF-like domain. N-linked (GlcNAc...) asparagine glycosylation is present at asparagine 177. 2 Sushi domains span residues 195–256 (IQCE…TCQV) and 257–318 (IQCE…ICQK). N-linked (GlcNAc...) asparagine glycosylation is found at asparagine 226, asparagine 232, asparagine 246, and asparagine 271. The chain crosses the membrane as a helical span at residues 333–355 (PLFIPVAVIVTAFSGLAFIIWLA). The Cytoplasmic portion of the chain corresponds to 356–372 (RRLKKGKKSKKSMDDPY).

It belongs to the selectin/LECAM family. Interaction with SELPLG/PSGL1 and PODXL2 is required for promoting recruitment and rolling of leukocytes. This interaction is dependent on the sialyl Lewis X glycan modification of SELPLG and PODXL2, and tyrosine sulfation modifications of SELPLG. Sulfation on 'Tyr-51' of SELPLG is important for L-selectin binding. In terms of processing, N-glycosylated.

Its subcellular location is the cell membrane. Its function is as follows. Calcium-dependent lectin that mediates cell adhesion by binding to glycoproteins on neighboring cells. Mediates the adherence of lymphocytes to endothelial cells of high endothelial venules in peripheral lymph nodes. Promotes initial tethering and rolling of leukocytes in endothelia. In Papio hamadryas (Hamadryas baboon), this protein is L-selectin (SELL).